Here is a 257-residue protein sequence, read N- to C-terminus: E3 ubiquitin-protein ligase RNF170 (257 aa).

The Lumenal segment spans residues 1-24 (MADNQEGRPYFPLDEGSIIEGVSD). Residues 25–45 (QVIVVVLLSFVAVGSLLYLLL) form a helical membrane-spanning segment. At 46–200 (RNDEQNIHPE…GGLFWMFRIR (155 aa)) the chain is on the cytoplasmic side. The RING-type zinc-finger motif lies at 87 to 130 (CPVCLQQATFPVETNCGHLFCGSCIIAYWRYGSWLGAINCPICR). The chain crosses the membrane as a helical span at residues 201–221 (IVLCLLGALFYLVSPLDIIPE). A topological domain (lumenal) is located at residue alanine 222. The chain crosses the membrane as a helical span at residues 223–243 (VFGLLGFLDDFFVLFLLLIYI). At 244-257 (SIMYREVVTQRLYR) the chain is on the cytoplasmic side.

The protein resides in the endoplasmic reticulum membrane. The catalysed reaction is S-ubiquitinyl-[E2 ubiquitin-conjugating enzyme]-L-cysteine + [acceptor protein]-L-lysine = [E2 ubiquitin-conjugating enzyme]-L-cysteine + N(6)-ubiquitinyl-[acceptor protein]-L-lysine.. The protein operates within protein modification; protein ubiquitination. E3 ubiquitin-protein ligase that plays an essential role in stimulus-induced inositol 1,4,5-trisphosphate receptor (ITPR) ubiquitination and degradation via the endoplasmic reticulum-associated degradation (ERAD) pathway. Also involved in ITPR turnover in resting cells. In Xenopus tropicalis (Western clawed frog), this protein is E3 ubiquitin-protein ligase RNF170 (rnf170).